Consider the following 574-residue polypeptide: R-linalool synthase, chloroplastic (574 aa).

The transit peptide at 1–40 directs the protein to the chloroplast; it reads MSCARITVTLPYRSAKTSIQRGITHCPALLRPRFSACTPL. Polar residues predominate over residues 52-61; sequence INGDNSPLKN. The segment at 52–71 is disordered; it reads INGDNSPLKNTHQHVEERSS. The (2E)-geranyl diphosphate site is built by R287, D324, D328, R467, and D470. Mg(2+) contacts are provided by D324 and D328. A DDXXD motif motif is present at residues 324 to 328; sequence DDIFD. Positions 470, 474, and 478 each coordinate Mg(2+).

It belongs to the terpene synthase family. Tpsb subfamily. Mg(2+) is required as a cofactor. The cofactor is Mn(2+).

It localises to the plastid. The protein localises to the chloroplast. It carries out the reaction (2E)-geranyl diphosphate + H2O = (R)-linalool + diphosphate. The protein operates within secondary metabolite biosynthesis; terpenoid biosynthesis. Functionally, monoterpene synthase that catalyzes the formation of (3R)-linalool from geranyl diphosphate. This is R-linalool synthase, chloroplastic (LIS) from Ocimum basilicum (Sweet basil).